A 313-amino-acid chain; its full sequence is tRNA dimethylallyltransferase (313 aa).

Position 17–24 (17–24 (GPTASGKT)) interacts with ATP. 19–24 (TASGKT) serves as a coordination point for substrate. Interaction with substrate tRNA regions lie at residues 42-45 (DSAL), 166-170 (QRLSR), 247-252 (RCVGYR), and 280-287 (KRQITWLR).

The protein belongs to the IPP transferase family. As to quaternary structure, monomer. It depends on Mg(2+) as a cofactor.

It carries out the reaction adenosine(37) in tRNA + dimethylallyl diphosphate = N(6)-dimethylallyladenosine(37) in tRNA + diphosphate. In terms of biological role, catalyzes the transfer of a dimethylallyl group onto the adenine at position 37 in tRNAs that read codons beginning with uridine, leading to the formation of N6-(dimethylallyl)adenosine (i(6)A). This chain is tRNA dimethylallyltransferase, found in Photorhabdus laumondii subsp. laumondii (strain DSM 15139 / CIP 105565 / TT01) (Photorhabdus luminescens subsp. laumondii).